Here is a 390-residue protein sequence, read N- to C-terminus: Homeobox protein Meis1 (390 aa).

Residues 108 to 192 (GGDVCSSESF…IDLVIDDREG (85 aa)) form the MEIS N-terminal domain. A compositionally biased stretch (basic and acidic residues) spans 190–202 (REGGSKSDSEDIT). Positions 190–279 (REGGSKSDSE…KKRHKKRGIF (90 aa)) are disordered. The span at 203–213 (RSANLTDQPSW) shows a compositional bias: polar residues. The segment at residues 272 to 334 (RHKKRGIFPK…NARRRIVQPM (63 aa)) is a DNA-binding region (homeobox; TALE-type). The segment at 299-329 (YPSEEQKKQLAQDTGLTILQVNNWFINARRR) is interaction with DNA. The interval 335–390 (IDQSNRAVSQGTPYNPDGQPMGGFVMDGQQHMGIRAPGPMSGMGMNMGMEGQWHYM) is required for transcriptional activation.

The protein belongs to the TALE/MEIS homeobox family. In terms of assembly, interacts with the N-terminal region of PBX1 to form a heterodimer which binds DNA including a cAMP-responsive sequence in CYP17. Also forms heterodimers with PBX2. Forms heterotrimers with PBX1 or PBX2 and a number of HOX proteins including HOXA9, HOXD4 and HOXD9 where it acts as a non-DNA-binding partner. Also forms heterotrimers with PBX1 and HOX proteins including HOXD9 and HOXD10 where PBX1 is the non-DNA-binding partner. Heterodimer with DLX3. Heterodimer with HOXB13. As to expression, expressed at low level in normal immunohepatopoietic tissues, including the fetal liver. Expressed in a subset of myeloid leukemia cell lines, with the highest expression seen in those with a megakaryocytic-erythroid phenotype. Also expressed at high levels in the cerebellum.

It is found in the nucleus. Functionally, acts as a transcriptional regulator of PAX6. Acts as a transcriptional activator of PF4 in complex with PBX1 or PBX2. Required for hematopoiesis, megakaryocyte lineage development and vascular patterning. May function as a cofactor for HOXA7 and HOXA9 in the induction of myeloid leukemias. The polypeptide is Homeobox protein Meis1 (MEIS1) (Homo sapiens (Human)).